The primary structure comprises 104 residues: Large ribosomal subunit protein bL21 (104 aa).

This sequence belongs to the bacterial ribosomal protein bL21 family. In terms of assembly, part of the 50S ribosomal subunit. Contacts protein L20.

Functionally, this protein binds to 23S rRNA in the presence of protein L20. This Symbiobacterium thermophilum (strain DSM 24528 / JCM 14929 / IAM 14863 / T) protein is Large ribosomal subunit protein bL21.